We begin with the raw amino-acid sequence, 178 residues long: Protein-export protein SecB (178 aa).

Residues 1 to 13 (MADEGDVLTDLDM) are compositionally biased toward acidic residues. Positions 1 to 25 (MADEGDVLTDLDMDPAAGGNGADNR) are disordered.

The protein belongs to the SecB family. In terms of assembly, homotetramer, a dimer of dimers. One homotetramer interacts with 1 SecA dimer.

It localises to the cytoplasm. One of the proteins required for the normal export of preproteins out of the cell cytoplasm. It is a molecular chaperone that binds to a subset of precursor proteins, maintaining them in a translocation-competent state. It also specifically binds to its receptor SecA. This Erythrobacter litoralis (strain HTCC2594) protein is Protein-export protein SecB.